The primary structure comprises 102 residues: Parathymosin (102 aa).

Residues 1–102 (MSEKSVEAAA…RQKTENGASA (102 aa)) form a disordered region. The residue at position 2 (Ser-2) is an N-acetylserine. The residue at position 2 (Ser-2) is a Phosphoserine. The residue at position 4 (Lys-4) is an N6-acetyllysine. Phosphoserine is present on residues Ser-5 and Ser-13. Residues 13 to 37 (SAKDLKEKKEKVEEKAGRKERKKEV) are compositionally biased toward basic and acidic residues. At Lys-15 the chain carries N6-acetyllysine. Over residues 38–76 (VEEEENGAEEEEEETAEDGEEEDDGDEEDEEEEEEEDEG) the composition is skewed to acidic residues. Thr-52 carries the post-translational modification Phosphothreonine. N6-acetyllysine is present on Lys-92.

It belongs to the pro/parathymosin family.

Its function is as follows. Parathymosin may mediate immune function by blocking the effect of prothymosin alpha which confers resistance to certain opportunistic infections. The chain is Parathymosin (PTMS) from Bos taurus (Bovine).